A 75-amino-acid polypeptide reads, in one-letter code: SPbeta prophage-derived uncharacterized protein YorX (75 aa).

In Bacillus subtilis (strain 168), this protein is SPbeta prophage-derived uncharacterized protein YorX (yorX).